Reading from the N-terminus, the 250-residue chain is High affinity immunoglobulin epsilon receptor subunit alpha (250 aa).

The N-terminal stretch at Met1–Thr23 is a signal peptide. At Ala24 to Gln204 the chain is on the extracellular side. Positions Ser28–Tyr104 constitute an Ig-like 1 domain. Cysteines 49 and 92 form a disulfide. N-linked (GlcNAc...) asparagine glycans are attached at residues Asn58, Asn66, Asn73, Asn106, Asn152, and Asn167. An Ig-like 2 domain is found at Leu114–Val181. A disulfide bridge links Cys131 with Cys174. Residues Leu205 to Leu223 form a helical membrane-spanning segment. The Cytoplasmic segment spans residues Ser224 to Thr250.

In terms of assembly, tetramer of an alpha chain, a beta chain, and two disulfide linked gamma chains. Interacts with IGHE (via CH3 region). In terms of tissue distribution, expressed in bone marrow mast cells, as well as in the pineal gland at night.

It localises to the cell membrane. High-affinity receptor for immunoglobulin epsilon/IgE. Mediates IgE effector functions in myeloid cells. Upon IgE binding and antigen/allergen cross-linking initiates signaling pathways that lead to myeloid cell activation and differentiation. On mast cells, basophils and eosinophils stimulates the secretion of vasoactive amines, lipid mediators and cytokines that contribute to inflammatory response, tissue remodeling and cytotoxicity against microbes. Triggers the immediate hypersensitivity response to allergens as a host defense mechanism against helminth parasites, pathogenic bacteria and venom toxicity. When dysregulated, it can elicit harmful life-threatening allergic and anaphylactic reactions. This chain is High affinity immunoglobulin epsilon receptor subunit alpha (Fcer1a), found in Mus musculus (Mouse).